We begin with the raw amino-acid sequence, 203 residues long: Ribosome maturation factor RimP (203 aa).

The interval 179–203 (VSSEGEDGGEARQAPKLNPKKPGKK) is disordered.

Belongs to the RimP family.

It localises to the cytoplasm. Its function is as follows. Required for maturation of 30S ribosomal subunits. The chain is Ribosome maturation factor RimP from Gluconobacter oxydans (strain 621H) (Gluconobacter suboxydans).